The following is a 211-amino-acid chain: Large ribosomal subunit protein eL13 (211 aa).

Lys16 is subject to N6-acetyllysine. Residues Ser77 and Ser106 each carry the phosphoserine modification. Glycyl lysine isopeptide (Lys-Gly) (interchain with G-Cter in SUMO2) cross-links involve residues Lys123 and Lys145. A Glycyl lysine isopeptide (Lys-Gly) (interchain with G-Cter in SUMO1); alternate cross-link involves residue Lys174. Glycyl lysine isopeptide (Lys-Gly) (interchain with G-Cter in SUMO2); alternate cross-links involve residues Lys174 and Lys177. Lys177 is subject to N6-acetyllysine; alternate.

The protein belongs to the eukaryotic ribosomal protein eL13 family. As to quaternary structure, component of the 60S large ribosomal subunit (LSU).

The protein resides in the cytoplasm. Its function is as follows. Component of the ribosome, a large ribonucleoprotein complex responsible for the synthesis of proteins in the cell. The small ribosomal subunit (SSU) binds messenger RNAs (mRNAs) and translates the encoded message by selecting cognate aminoacyl-transfer RNA (tRNA) molecules. The large subunit (LSU) contains the ribosomal catalytic site termed the peptidyl transferase center (PTC), which catalyzes the formation of peptide bonds, thereby polymerizing the amino acids delivered by tRNAs into a polypeptide chain. The nascent polypeptides leave the ribosome through a tunnel in the LSU and interact with protein factors that function in enzymatic processing, targeting, and the membrane insertion of nascent chains at the exit of the ribosomal tunnel. As part of the LSU, it is probably required for its formation and the maturation of rRNAs. Plays a role in bone development. This chain is Large ribosomal subunit protein eL13 (RPL13), found in Oryctolagus cuniculus (Rabbit).